The chain runs to 274 residues: Dermonecrotic toxin SdSicTox-betaIIB1biv (274 aa).

Histidine 5 is an active-site residue. Mg(2+) is bound by residues glutamate 25 and aspartate 27. Histidine 41 functions as the Nucleophile in the catalytic mechanism. Cystine bridges form between cysteine 45/cysteine 51 and cysteine 47/cysteine 190. Position 85 (aspartate 85) interacts with Mg(2+).

This sequence belongs to the arthropod phospholipase D family. Class II subfamily. It depends on Mg(2+) as a cofactor. As to expression, expressed by the venom gland.

It is found in the secreted. It carries out the reaction an N-(acyl)-sphingosylphosphocholine = an N-(acyl)-sphingosyl-1,3-cyclic phosphate + choline. The catalysed reaction is an N-(acyl)-sphingosylphosphoethanolamine = an N-(acyl)-sphingosyl-1,3-cyclic phosphate + ethanolamine. It catalyses the reaction a 1-acyl-sn-glycero-3-phosphocholine = a 1-acyl-sn-glycero-2,3-cyclic phosphate + choline. The enzyme catalyses a 1-acyl-sn-glycero-3-phosphoethanolamine = a 1-acyl-sn-glycero-2,3-cyclic phosphate + ethanolamine. Functionally, dermonecrotic toxins cleave the phosphodiester linkage between the phosphate and headgroup of certain phospholipids (sphingolipid and lysolipid substrates), forming an alcohol (often choline) and a cyclic phosphate. This toxin acts on sphingomyelin (SM). It may also act on ceramide phosphoethanolamine (CPE), lysophosphatidylcholine (LPC) and lysophosphatidylethanolamine (LPE), but not on lysophosphatidylserine (LPS), and lysophosphatidylglycerol (LPG). It acts by transphosphatidylation, releasing exclusively cyclic phosphate products as second products. Induces dermonecrosis, hemolysis, increased vascular permeability, edema, inflammatory response, and platelet aggregation. The polypeptide is Dermonecrotic toxin SdSicTox-betaIIB1biv (Sicarius cf. damarensis (strain GJB-2008) (Six-eyed sand spider)).